We begin with the raw amino-acid sequence, 1287 residues long: DENN domain-containing protein 5A (1287 aa).

One can recognise a uDENN domain in the interval Ser-57–Ser-259. Ser-193 carries the phosphoserine modification. The cDENN domain occupies Glu-278–Ile-414. In terms of domain architecture, dDENN spans Met-416–Asp-598. Positions Val-787–Thr-950 constitute an RUN 1 domain. Positions Ile-954–Val-1062 constitute a PLAT domain. The residue at position 1079 (Thr-1079) is a Phosphothreonine. A phosphoserine mark is found at Ser-1085, Ser-1087, and Ser-1096. In terms of domain architecture, RUN 2 spans Thr-1134–Ser-1280.

It belongs to the RAB6IP1 family. As to quaternary structure, interacts with RAB6A bound to GTP. As to expression, expressed in developing brain and developing neurons.

Its subcellular location is the golgi apparatus membrane. In terms of biological role, guanine nucleotide exchange factor (GEF) which may activate RAB6A and RAB39A and/or RAB39B. Promotes the exchange of GDP to GTP, converting inactive GDP-bound Rab proteins into their active GTP-bound form. Involved in the negative regulation of neurite outgrowth. This chain is DENN domain-containing protein 5A (Dennd5a), found in Rattus norvegicus (Rat).